Reading from the N-terminus, the 379-residue chain is MKKKTLMIHGGITGDEKTGAVSVPIYQVSTYKQPKAGQHTGYEYSRTANPTRTALEALVTELESGEAGYAFSSGMAAITAVMMLFNSGDHVVLTDDVYGGTYRVMTKVLNRLGIESTFVDTSSREEVEKAIRPNTKAIYIETPTNPLLKITDLTLMADIAKKAGVLLIVDNTFNTPYFQQPLTLGADIVLHSATKYLGGHSDVVGGLVVTASKELGEELHFVQNSTGGVLGPQDSWLLMRGIKTLGLRMEAIDQNARKIASFLENHPAVQTLYYPGSSNHPGHELAKTQGAGFGGMISFDIGSEERVDAFLGNLKLFTIAESLGAVESLISVPARMTHASIPRERRLELGITDGLIRISVGIEDAEDLLEDIGQALENI.

The residue at position 195 (Lys-195) is an N6-(pyridoxal phosphate)lysine.

The protein belongs to the trans-sulfuration enzymes family. It depends on pyridoxal 5'-phosphate as a cofactor.

The enzyme catalyses L,L-cystathionine + H2O = 2-oxobutanoate + L-cysteine + NH4(+). It carries out the reaction L-homocysteine + H2O = 2-oxobutanoate + hydrogen sulfide + NH4(+) + H(+). In terms of biological role, catalyzes the conversion of cystathionine to cysteine, and homocysteine to sulfide. The chain is Cystathionine gamma-lyase (mccB) from Bacillus subtilis (strain 168).